The chain runs to 240 residues: 1-(5-phosphoribosyl)-5-[(5-phosphoribosylamino)methylideneamino] imidazole-4-carboxamide isomerase (240 aa).

The active-site Proton acceptor is the Asp-8. The active-site Proton donor is the Asp-129.

Belongs to the HisA/HisF family.

It is found in the cytoplasm. The enzyme catalyses 1-(5-phospho-beta-D-ribosyl)-5-[(5-phospho-beta-D-ribosylamino)methylideneamino]imidazole-4-carboxamide = 5-[(5-phospho-1-deoxy-D-ribulos-1-ylimino)methylamino]-1-(5-phospho-beta-D-ribosyl)imidazole-4-carboxamide. It participates in amino-acid biosynthesis; L-histidine biosynthesis; L-histidine from 5-phospho-alpha-D-ribose 1-diphosphate: step 4/9. In Listeria monocytogenes serotype 4b (strain CLIP80459), this protein is 1-(5-phosphoribosyl)-5-[(5-phosphoribosylamino)methylideneamino] imidazole-4-carboxamide isomerase.